The primary structure comprises 178 residues: Enhancer of split m5 protein (178 aa).

One can recognise a bHLH domain in the interval 18 to 73 (YLKVKKPLLERQRRARMNKCLDTLKTLVAEFQGDDAILRMDKAEMLEAALVFMRKQ). Positions 89–122 (FKNGYMNAVSEISRVMACTPAMSVDVGKTVMTHL) constitute an Orange domain. Over residues 135–165 (VQTSVTTSTPRPLSPASSGYHSDNEDSQSAA) the composition is skewed to polar residues. A disordered region spans residues 135 to 178 (VQTSVTTSTPRPLSPASSGYHSDNEDSQSAASPKPVEETMWRPW). Positions 169-178 (PVEETMWRPW) are enriched in basic and acidic residues. A WRPW motif motif is present at residues 175–178 (WRPW).

As to quaternary structure, transcription repression requires formation of a complex with a corepressor protein (Groucho). Forms homodimers.

Its subcellular location is the nucleus. Its function is as follows. Participates in the control of cell fate choice by uncommitted neuroectodermal cells in the embryo. Transcriptional repressor. Binds DNA on N-box motifs: 5'-CACNAG-3'. The sequence is that of Enhancer of split m5 protein from Drosophila melanogaster (Fruit fly).